A 122-amino-acid chain; its full sequence is Large ribosomal subunit protein bL12 (122 aa).

The protein belongs to the bacterial ribosomal protein bL12 family. Homodimer. Part of the ribosomal stalk of the 50S ribosomal subunit. Forms a multimeric L10(L12)X complex, where L10 forms an elongated spine to which 2 to 4 L12 dimers bind in a sequential fashion. Binds GTP-bound translation factors.

Functionally, forms part of the ribosomal stalk which helps the ribosome interact with GTP-bound translation factors. Is thus essential for accurate translation. This is Large ribosomal subunit protein bL12 from Pseudomonas entomophila (strain L48).